Reading from the N-terminus, the 439-residue chain is Argininosuccinate lyase (439 aa).

It belongs to the lyase 1 family. Argininosuccinate lyase subfamily.

It localises to the cytoplasm. It catalyses the reaction 2-(N(omega)-L-arginino)succinate = fumarate + L-arginine. It participates in amino-acid biosynthesis; L-arginine biosynthesis; L-arginine from L-ornithine and carbamoyl phosphate: step 3/3. The chain is Argininosuccinate lyase from Caldanaerobacter subterraneus subsp. tengcongensis (strain DSM 15242 / JCM 11007 / NBRC 100824 / MB4) (Thermoanaerobacter tengcongensis).